A 391-amino-acid polypeptide reads, in one-letter code: Small ribosomal subunit protein bS1 (391 aa).

S1 motif domains are found at residues 16 to 90, 108 to 173, 194 to 262, and 279 to 348; these read GDKV…LSRR, NEII…LSRK, GDVI…LSIK, and NDVI…LSIK.

This sequence belongs to the bacterial ribosomal protein bS1 family.

Functionally, binds mRNA; thus facilitating recognition of the initiation point. It is needed to translate mRNA with a short Shine-Dalgarno (SD) purine-rich sequence. The polypeptide is Small ribosomal subunit protein bS1 (rpsA) (Staphylococcus aureus (strain N315)).